A 284-amino-acid chain; its full sequence is Acetylglutamate kinase (284 aa).

Residues Gly64–Gly65, Arg86, and Asn179 each bind substrate.

Belongs to the acetylglutamate kinase family. ArgB subfamily.

Its subcellular location is the cytoplasm. The enzyme catalyses N-acetyl-L-glutamate + ATP = N-acetyl-L-glutamyl 5-phosphate + ADP. It participates in amino-acid biosynthesis; L-arginine biosynthesis; N(2)-acetyl-L-ornithine from L-glutamate: step 2/4. In terms of biological role, catalyzes the ATP-dependent phosphorylation of N-acetyl-L-glutamate. This is Acetylglutamate kinase from Acaryochloris marina (strain MBIC 11017).